Reading from the N-terminus, the 168-residue chain is Ribosome maturation factor RimM (168 aa).

One can recognise a PRC barrel domain in the interval glutamate 96–leucine 168.

It belongs to the RimM family. Binds ribosomal protein uS19.

The protein localises to the cytoplasm. Functionally, an accessory protein needed during the final step in the assembly of 30S ribosomal subunit, possibly for assembly of the head region. Essential for efficient processing of 16S rRNA. May be needed both before and after RbfA during the maturation of 16S rRNA. It has affinity for free ribosomal 30S subunits but not for 70S ribosomes. The chain is Ribosome maturation factor RimM from Caldanaerobacter subterraneus subsp. tengcongensis (strain DSM 15242 / JCM 11007 / NBRC 100824 / MB4) (Thermoanaerobacter tengcongensis).